A 283-amino-acid polypeptide reads, in one-letter code: Bifunctional protein FolD (283 aa).

NADP(+)-binding positions include 165 to 167 and Ser190; that span reads GRS.

The protein belongs to the tetrahydrofolate dehydrogenase/cyclohydrolase family. In terms of assembly, homodimer.

It carries out the reaction (6R)-5,10-methylene-5,6,7,8-tetrahydrofolate + NADP(+) = (6R)-5,10-methenyltetrahydrofolate + NADPH. It catalyses the reaction (6R)-5,10-methenyltetrahydrofolate + H2O = (6R)-10-formyltetrahydrofolate + H(+). It participates in one-carbon metabolism; tetrahydrofolate interconversion. Functionally, catalyzes the oxidation of 5,10-methylenetetrahydrofolate to 5,10-methenyltetrahydrofolate and then the hydrolysis of 5,10-methenyltetrahydrofolate to 10-formyltetrahydrofolate. This Methylibium petroleiphilum (strain ATCC BAA-1232 / LMG 22953 / PM1) protein is Bifunctional protein FolD.